The chain runs to 139 residues: Putative flagella-related protein F (139 aa).

Residues 1-18 (MGFSSVVGATVMIIALLV) form the signal peptide. Cysteine 19 carries the post-translational modification N-acetylcysteine. Cysteine 19 carries S-archaeol cysteine lipidation.

This sequence to M.voltae FlaF.

Its subcellular location is the archaeal flagellum. It localises to the membrane. This Methanocaldococcus jannaschii (strain ATCC 43067 / DSM 2661 / JAL-1 / JCM 10045 / NBRC 100440) (Methanococcus jannaschii) protein is Putative flagella-related protein F (flaF).